The following is a 124-amino-acid chain: Cytochrome c2 (124 aa).

A Pyrrolidone carboxylic acid modification is found at Gln-1. Heme c-binding residues include Cys-16, Cys-19, His-20, and Met-85.

It belongs to the cytochrome c family. In terms of processing, binds 1 heme c group covalently per subunit.

It localises to the periplasm. Cytochrome c2 is found mainly in purple, non-sulfur, photosynthetic bacteria where it functions as the electron donor to the oxidized bacteriochlorophyll in the photophosphorylation pathway. However, it may also have a role in the respiratory chain and is found in some non-photosynthetic bacteria. This Afifella marina (Rhodobium marinum) protein is Cytochrome c2.